A 118-amino-acid polypeptide reads, in one-letter code: Hisactophilin-2 (118 aa).

G2 is lipidated: N-myristoyl glycine. The contains several HHXH repeats stretch occupies residues 8–109 (AHNGHYLSAE…HVSTSHHHDH (102 aa)). Tandem repeats lie at residues 34–46 (FHIENHGSKVALR) and 74–86 (FHLEHHHGKVSIK). The tract at residues 34 to 86 (FHIENHGSKVALRTHCGKYVSIGDHKQVYLSHHLHGDHSLFHLEHHHGKVSIK) is 2 X 13 AA approximate repeats. Residues 99-118 (GHVSTSHHHDHHATFEEHIL) are disordered.

Belongs to the hisactophilin family. Homodimer or heterodimer of hatA and hatB, linked by a disulfide bond. Post-translationally, phosphorylated.

Its subcellular location is the cytoplasm. It localises to the cell membrane. Functionally, may act as an intracellular pH sensor that links chemotactic signals to responses in the microfilament system of the cells by nucleating actin polymerization or stabilizing the filaments. The chain is Hisactophilin-2 (hatB) from Dictyostelium discoideum (Social amoeba).